The following is a 283-amino-acid chain: ATP phosphoribosyltransferase (283 aa).

Belongs to the ATP phosphoribosyltransferase family. Long subfamily. It depends on Mg(2+) as a cofactor.

The protein localises to the cytoplasm. The catalysed reaction is 1-(5-phospho-beta-D-ribosyl)-ATP + diphosphate = 5-phospho-alpha-D-ribose 1-diphosphate + ATP. It participates in amino-acid biosynthesis; L-histidine biosynthesis; L-histidine from 5-phospho-alpha-D-ribose 1-diphosphate: step 1/9. Its activity is regulated as follows. Feedback inhibited by histidine. Catalyzes the condensation of ATP and 5-phosphoribose 1-diphosphate to form N'-(5'-phosphoribosyl)-ATP (PR-ATP). Has a crucial role in the pathway because the rate of histidine biosynthesis seems to be controlled primarily by regulation of HisG enzymatic activity. The protein is ATP phosphoribosyltransferase of Bifidobacterium longum (strain NCC 2705).